Consider the following 174-residue polypeptide: B3 domain-containing protein At3g06220 (174 aa).

Positions 8-101 form a DNA-binding region, TF-B3; the sequence is PRFYTVFLSC…SYEVSIYGRG (94 aa). The disordered stretch occupies residues 114-174; it reads EISDESESDN…ISDASDSDYY (61 aa). 2 stretches are compositionally biased toward acidic residues: residues 139–150 and 164–174; these read ENSDDTEGDNDS and EISDASDSDYY.

The protein localises to the nucleus. The chain is B3 domain-containing protein At3g06220 from Arabidopsis thaliana (Mouse-ear cress).